A 448-amino-acid chain; its full sequence is GTPase Der (448 aa).

EngA-type G domains lie at 3–167 (PVIA…EPPE) and 182–355 (TRLA…ASAT). Residues 9–16 (GRPNVGKS), 56–60 (DTGGF), 119–122 (NKAE), 188–195 (GRPNVGKS), 235–239 (DTAGL), and 300–303 (NKWD) each bind GTP. The region spanning 356–440 (RKLPTPQLTR…PMRIELRASH (85 aa)) is the KH-like domain.

This sequence belongs to the TRAFAC class TrmE-Era-EngA-EngB-Septin-like GTPase superfamily. EngA (Der) GTPase family. Associates with the 50S ribosomal subunit.

Functionally, GTPase that plays an essential role in the late steps of ribosome biogenesis. The chain is GTPase Der from Leptothrix cholodnii (strain ATCC 51168 / LMG 8142 / SP-6) (Leptothrix discophora (strain SP-6)).